A 311-amino-acid chain; its full sequence is Malate dehydrogenase (311 aa).

NAD(+) is bound by residues 7–13 (GAAGGIG) and aspartate 34. Arginine 81 and arginine 87 together coordinate substrate. Residues asparagine 94 and 117-119 (ITN) each bind NAD(+). Residues asparagine 119 and arginine 153 each coordinate substrate. The active-site Proton acceptor is the histidine 177. Methionine 227 is a binding site for NAD(+).

This sequence belongs to the LDH/MDH superfamily. MDH type 1 family. Homodimer.

It carries out the reaction (S)-malate + NAD(+) = oxaloacetate + NADH + H(+). In terms of biological role, catalyzes the reversible oxidation of malate to oxaloacetate. The protein is Malate dehydrogenase of Aliivibrio salmonicida (strain LFI1238) (Vibrio salmonicida (strain LFI1238)).